The following is a 395-amino-acid chain: GPI-anchor transamidase (395 aa).

Residues 1 to 27 (MAVTDSLSRAASTLAAVLLLSFGSVAA) form the signal peptide. The Lumenal portion of the chain corresponds to 28 to 368 (SHIEDQAEQF…PKLKDWHPPG (341 aa)). Residues Asp-79, Ile-82, Glu-118, and Asp-120 each coordinate Ca(2+). Catalysis depends on His-164, which acts as the Proton donor. Catalysis depends on Cys-206, which acts as the Nucleophile; acyl-thioester intermediate. A protein-binding residues include Cys-206, Ser-232, and Ser-234. Residues 231 to 236 (DSLSHQ) are autoinhibitory loop. An intrachain disulfide couples Cys-275 to Cys-280. Residues 369 to 385 (GFILGLWALIIMVFFKT) form a helical membrane-spanning segment. The Cytoplasmic segment spans residues 386 to 395 (YGIKHMKFIF).

This sequence belongs to the peptidase C13 family. Heteropentamer. Part of the GPI-anchor transamidase complex, consisting of PIGK, PIGT, PIGS, PIGU and GAA1. Interacts with GPAA1. Interacts with PIGT; this interaction, via a disulfide link, stabilizes the expression of GAA1 and PIGK and links them to PIGS. Post-translationally, the disulfide bond between PIGK/GPI8 and PIGT is important for normal enzyme activity.

The protein resides in the endoplasmic reticulum membrane. Its pathway is glycolipid biosynthesis; glycosylphosphatidylinositol-anchor biosynthesis. In the absence of proproteins substrates, exists in an inactive state with a disrupted catalytic site by an autoinhibitory loop. The binding of proprotein substrates, particularly the CSP region, to GPI-T triggers concerted conformational changes that alleviate the inhibition by the autoinhibitory loop. Meanwhile, proprotein residues near the omega- site induce the formation of a catalytic cleft for catalysis, following which the products are released and GPI-T reverts to the inactive state. Catalytic subunit of the glycosylphosphatidylinositol-anchor (GPI-anchor) transamidase (GPI-T) complex that catalyzes the formation of the linkage between a proprotein and a GPI-anchor and participates in GPI anchored protein biosynthesis. Recognizes diverse proproteins at a C-terminal signal peptide (CSP) region that lacks consensus sequence and replaces it with a GPI-anchor via a transamidation reaction. Transamidation catalysis reaction follows a two-phase mechanism. In the acyl-enzyme phase, the carbonyl group of the proproteins's omega-site undergoes a nucleophilic attack forming an enzyme-substrate thioester bond. Followed by a general acid catalysis that allows CSP releasing, regenerating the carbonyl, and forming the acyl-enzyme intermediate. In the GPI-anchor attachment phase, the amino group of the GPI-anchor's ethanolamine phosphate, the one on third mannose (EtNP3), mediates a nucleophilic attack on the carbonyl of the acyl-enzyme intermediate, replacing the CSP, allowing GPI-anchor attachment to the omega-residue, therefore forming the product and freeing the enzyme. The protein is GPI-anchor transamidase of Pongo abelii (Sumatran orangutan).